The sequence spans 268 residues: Tryptophan synthase alpha chain (268 aa).

Active-site proton acceptor residues include Glu49 and Asp60.

The protein belongs to the TrpA family. As to quaternary structure, tetramer of two alpha and two beta chains.

It carries out the reaction (1S,2R)-1-C-(indol-3-yl)glycerol 3-phosphate + L-serine = D-glyceraldehyde 3-phosphate + L-tryptophan + H2O. It participates in amino-acid biosynthesis; L-tryptophan biosynthesis; L-tryptophan from chorismate: step 5/5. In terms of biological role, the alpha subunit is responsible for the aldol cleavage of indoleglycerol phosphate to indole and glyceraldehyde 3-phosphate. The sequence is that of Tryptophan synthase alpha chain from Shigella flexneri serotype 5b (strain 8401).